A 300-amino-acid chain; its full sequence is uncharacterized protein (300 aa).

The first 19 residues, 1–19, serve as a signal peptide directing secretion; that stretch reads MKLKLLLIPLLGSSLLLSA. Residue C20 is the site of N-palmitoyl cysteine attachment. C20 carries S-diacylglycerol cysteine lipidation.

Belongs to the MG439/MG440 family.

Its subcellular location is the cell membrane. This is an uncharacterized protein from Mycoplasma pneumoniae (strain ATCC 29342 / M129 / Subtype 1) (Mycoplasmoides pneumoniae).